The chain runs to 408 residues: Probable E3 ubiquitin-protein ligase makorin-1 (408 aa).

2 consecutive C3H1-type zinc fingers follow at residues 34–61 (WTRH…HDLA) and 63–90 (SRSA…HNKP). 2 disordered regions span residues 90–114 (PLQE…SGNI) and 154–173 (EAYT…PADP). Over residues 162-173 (KPDEGREEPADP) the composition is skewed to basic and acidic residues. A C3H1-type 3 zinc finger spans residues 174-201 (ELKKQLCPYAAMGECRYGENCVYLHGDP). The interval 202–229 (CDMCGLQVLHPVDTCQRSQHIKSCIEAH) is makorin-type Cys-His. The RING-type zinc-finger motif lies at 247–301 (CGICMEVVYEKTNPSERRFGILSNCSHSYCLKCIRKWRSAKQFESKIIKSCPECR). The C3H1-type 4 zinc finger occupies 330–359 (AMSSKSCRYFDEGRGTCPFGGNCFYRHAYP). The interval 363–408 (IEEPQPRQKSGMSSRYRIPSPSAGIDFGSLTSERAETRLRTRKTKL) is disordered.

It catalyses the reaction S-ubiquitinyl-[E2 ubiquitin-conjugating enzyme]-L-cysteine + [acceptor protein]-L-lysine = [E2 ubiquitin-conjugating enzyme]-L-cysteine + N(6)-ubiquitinyl-[acceptor protein]-L-lysine.. It participates in protein modification; protein ubiquitination. Its function is as follows. E3 ubiquitin ligase catalyzing the covalent attachment of ubiquitin moieties onto substrate proteins. The protein is Probable E3 ubiquitin-protein ligase makorin-1 (mkrn1) of Xenopus laevis (African clawed frog).